We begin with the raw amino-acid sequence, 325 residues long: Elongation factor P--(R)-beta-lysine ligase (325 aa).

76-78 (SPE) provides a ligand contact to substrate. Residues 100 to 102 (RNE) and Asn-109 each bind ATP. Residue Tyr-118 coordinates substrate. 244–245 (EL) serves as a coordination point for ATP. Glu-251 lines the substrate pocket. Gly-300 contacts ATP.

Belongs to the class-II aminoacyl-tRNA synthetase family. EpmA subfamily. In terms of assembly, homodimer.

It carries out the reaction D-beta-lysine + L-lysyl-[protein] + ATP = N(6)-((3R)-3,6-diaminohexanoyl)-L-lysyl-[protein] + AMP + diphosphate + H(+). In terms of biological role, with EpmB is involved in the beta-lysylation step of the post-translational modification of translation elongation factor P (EF-P). Catalyzes the ATP-dependent activation of (R)-beta-lysine produced by EpmB, forming a lysyl-adenylate, from which the beta-lysyl moiety is then transferred to the epsilon-amino group of a conserved specific lysine residue in EF-P. The chain is Elongation factor P--(R)-beta-lysine ligase from Sodalis glossinidius (strain morsitans).